A 47-amino-acid chain; its full sequence is Cytochrome b559 subunit beta (47 aa).

The helical transmembrane segment at 22 to 38 threads the bilayer; the sequence is WLAVHTLAIPTVFFLGA. His26 is a heme binding site.

This sequence belongs to the PsbE/PsbF family. In terms of assembly, heterodimer of an alpha subunit and a beta subunit. PSII is composed of 1 copy each of membrane proteins PsbA, PsbB, PsbC, PsbD, PsbE, PsbF, PsbH, PsbI, PsbJ, PsbK, PsbL, PsbM, PsbT, PsbX, PsbY, PsbZ, Psb30/Ycf12, peripheral proteins PsbO, CyanoQ (PsbQ), PsbU, PsbV and a large number of cofactors. It forms dimeric complexes. Heme b serves as cofactor.

It is found in the cellular thylakoid membrane. In terms of biological role, this b-type cytochrome is tightly associated with the reaction center of photosystem II (PSII). PSII is a light-driven water:plastoquinone oxidoreductase that uses light energy to abstract electrons from H(2)O, generating O(2) and a proton gradient subsequently used for ATP formation. It consists of a core antenna complex that captures photons, and an electron transfer chain that converts photonic excitation into a charge separation. This Synechococcus sp. (strain JA-3-3Ab) (Cyanobacteria bacterium Yellowstone A-Prime) protein is Cytochrome b559 subunit beta.